Here is a 484-residue protein sequence, read N- to C-terminus: Protein nucleotidyltransferase YdiU (484 aa).

Residues Gly87, Gly89, Arg90, Lys110, Asp122, Gly123, Arg173, and Arg180 each coordinate ATP. The active-site Proton acceptor is Asp249. 2 residues coordinate Mg(2+): Asn250 and Asp259. Asp259 is an ATP binding site. The tract at residues 463–484 (EQEKYAELPPPSDRPYRTFCGT) is disordered.

This sequence belongs to the SELO family. Requires Mg(2+) as cofactor. The cofactor is Mn(2+).

The enzyme catalyses L-seryl-[protein] + ATP = 3-O-(5'-adenylyl)-L-seryl-[protein] + diphosphate. It carries out the reaction L-threonyl-[protein] + ATP = 3-O-(5'-adenylyl)-L-threonyl-[protein] + diphosphate. The catalysed reaction is L-tyrosyl-[protein] + ATP = O-(5'-adenylyl)-L-tyrosyl-[protein] + diphosphate. It catalyses the reaction L-histidyl-[protein] + UTP = N(tele)-(5'-uridylyl)-L-histidyl-[protein] + diphosphate. The enzyme catalyses L-seryl-[protein] + UTP = O-(5'-uridylyl)-L-seryl-[protein] + diphosphate. It carries out the reaction L-tyrosyl-[protein] + UTP = O-(5'-uridylyl)-L-tyrosyl-[protein] + diphosphate. Functionally, nucleotidyltransferase involved in the post-translational modification of proteins. It can catalyze the addition of adenosine monophosphate (AMP) or uridine monophosphate (UMP) to a protein, resulting in modifications known as AMPylation and UMPylation. This is Protein nucleotidyltransferase YdiU from Geobacillus kaustophilus (strain HTA426).